A 157-amino-acid chain; its full sequence is Protein Smg homolog (157 aa).

It belongs to the Smg family.

The polypeptide is Protein Smg homolog (Colwellia psychrerythraea (strain 34H / ATCC BAA-681) (Vibrio psychroerythus)).